The primary structure comprises 95 residues: Enhancer of yellow 2b transcription factor (95 aa).

The protein belongs to the ENY2 family. As to expression, expressed specifically in testis.

Functionally, testis-specific paralog of the ubiquitously expressed transcription and mRNA export factor e(y)2. Cannot functionally replace e(y)2. This is Enhancer of yellow 2b transcription factor (e(y)2b) from Drosophila melanogaster (Fruit fly).